Consider the following 166-residue polypeptide: 2-C-methyl-D-erythritol 2,4-cyclodiphosphate synthase (166 aa).

A divalent metal cation is bound by residues D12 and H14. 4-CDP-2-C-methyl-D-erythritol 2-phosphate-binding positions include 12–14 (DVH) and 38–39 (HS). H46 lines the a divalent metal cation pocket. 4-CDP-2-C-methyl-D-erythritol 2-phosphate contacts are provided by residues 60–62 (DIG), 136–139 (TTSE), F143, and R146.

The protein belongs to the IspF family. Homotrimer. Requires a divalent metal cation as cofactor.

The catalysed reaction is 4-CDP-2-C-methyl-D-erythritol 2-phosphate = 2-C-methyl-D-erythritol 2,4-cyclic diphosphate + CMP. It functions in the pathway isoprenoid biosynthesis; isopentenyl diphosphate biosynthesis via DXP pathway; isopentenyl diphosphate from 1-deoxy-D-xylulose 5-phosphate: step 4/6. Its function is as follows. Involved in the biosynthesis of isopentenyl diphosphate (IPP) and dimethylallyl diphosphate (DMAPP), two major building blocks of isoprenoid compounds. Catalyzes the conversion of 4-diphosphocytidyl-2-C-methyl-D-erythritol 2-phosphate (CDP-ME2P) to 2-C-methyl-D-erythritol 2,4-cyclodiphosphate (ME-CPP) with a corresponding release of cytidine 5-monophosphate (CMP). In Xanthomonas axonopodis pv. citri (strain 306), this protein is 2-C-methyl-D-erythritol 2,4-cyclodiphosphate synthase.